Reading from the N-terminus, the 51-residue chain is MSRNKPVAKKFRLAKALKANSPIPIWIVLKTRGRVRYNPLRRNWRRNDLKV.

It belongs to the eukaryotic ribosomal protein eL39 family.

This chain is Large ribosomal subunit protein eL39, found in Saccharolobus islandicus (strain L.S.2.15 / Lassen #1) (Sulfolobus islandicus).